Reading from the N-terminus, the 696-residue chain is Elongation factor G (696 aa).

The tr-type G domain maps to 8-288 (EDYRNFGIMA…AVVEYLPSPA (281 aa)). Residues 17 to 24 (AHIDAGKT), 86 to 90 (DTPGH), and 140 to 143 (NKMD) contribute to the GTP site.

It belongs to the TRAFAC class translation factor GTPase superfamily. Classic translation factor GTPase family. EF-G/EF-2 subfamily.

The protein localises to the cytoplasm. Its function is as follows. Catalyzes the GTP-dependent ribosomal translocation step during translation elongation. During this step, the ribosome changes from the pre-translocational (PRE) to the post-translocational (POST) state as the newly formed A-site-bound peptidyl-tRNA and P-site-bound deacylated tRNA move to the P and E sites, respectively. Catalyzes the coordinated movement of the two tRNA molecules, the mRNA and conformational changes in the ribosome. The polypeptide is Elongation factor G (Mesorhizobium japonicum (strain LMG 29417 / CECT 9101 / MAFF 303099) (Mesorhizobium loti (strain MAFF 303099))).